Consider the following 472-residue polypeptide: Ribosomal protein uS12 methylthiotransferase RimO (472 aa).

The region spanning 33–143 (NRIGFVSLGC…VLKHVHKYVP (111 aa)) is the MTTase N-terminal domain. Positions 42, 78, 107, 175, 179, and 182 each coordinate [4Fe-4S] cluster. The 238-residue stretch at 161-398 (LTPKHYAYLK…MELQAEISAE (238 aa)) folds into the Radical SAM core domain. The 67-residue stretch at 401–467 (ARFVGRTLDI…EHDLWAEVVD (67 aa)) folds into the TRAM domain.

It belongs to the methylthiotransferase family. RimO subfamily. The cofactor is [4Fe-4S] cluster.

It is found in the cytoplasm. The catalysed reaction is L-aspartate(89)-[ribosomal protein uS12]-hydrogen + (sulfur carrier)-SH + AH2 + 2 S-adenosyl-L-methionine = 3-methylsulfanyl-L-aspartate(89)-[ribosomal protein uS12]-hydrogen + (sulfur carrier)-H + 5'-deoxyadenosine + L-methionine + A + S-adenosyl-L-homocysteine + 2 H(+). In terms of biological role, catalyzes the methylthiolation of an aspartic acid residue of ribosomal protein uS12. This chain is Ribosomal protein uS12 methylthiotransferase RimO, found in Shewanella putrefaciens (strain CN-32 / ATCC BAA-453).